Reading from the N-terminus, the 595-residue chain is Probable L-gulonolactone oxidase 1 (595 aa).

The first 18 residues, 1 to 18, serve as a signal peptide directing secretion; that stretch reads MAFWLSLIFFCFCTFASS. Residues 47 to 229 form the FAD-binding PCMH-type domain; sequence SICEAAKVEY…SQVTFQLQPM (183 aa).

It belongs to the oxygen-dependent FAD-linked oxidoreductase family. The cofactor is FAD.

It carries out the reaction L-gulono-1,4-lactone + O2 = L-ascorbate + H2O2 + H(+). Its pathway is cofactor biosynthesis; L-ascorbate biosynthesis. Its function is as follows. May be involved in the biosynthesis of ascorbic acid. The polypeptide is Probable L-gulonolactone oxidase 1 (Arabidopsis thaliana (Mouse-ear cress)).